Consider the following 273-residue polypeptide: Putative phosphoenolpyruvate synthase regulatory protein (273 aa).

153–160 is an ADP binding site; sequence GVSRCGKT.

This sequence belongs to the pyruvate, phosphate/water dikinase regulatory protein family. PSRP subfamily.

The catalysed reaction is [pyruvate, water dikinase] + ADP = [pyruvate, water dikinase]-phosphate + AMP + H(+). It catalyses the reaction [pyruvate, water dikinase]-phosphate + phosphate + H(+) = [pyruvate, water dikinase] + diphosphate. Functionally, bifunctional serine/threonine kinase and phosphorylase involved in the regulation of the phosphoenolpyruvate synthase (PEPS) by catalyzing its phosphorylation/dephosphorylation. The sequence is that of Putative phosphoenolpyruvate synthase regulatory protein from Pectobacterium atrosepticum (strain SCRI 1043 / ATCC BAA-672) (Erwinia carotovora subsp. atroseptica).